The primary structure comprises 381 residues: Dihydroorotate dehydrogenase (quinone) (381 aa).

FMN contacts are provided by residues 74–78 (AGFDK) and Thr-98. Lys-78 serves as a coordination point for substrate. 123-127 (NRMGF) provides a ligand contact to substrate. 2 residues coordinate FMN: Asn-152 and Asn-185. Asn-185 is a substrate binding site. Ser-188 (nucleophile) is an active-site residue. Asn-190 is a binding site for substrate. The FMN site is built by Lys-223 and Thr-251. A substrate-binding site is contributed by 252-253 (NT). FMN contacts are provided by residues Gly-289, Gly-318, and 339 to 340 (YT). Residues 359–381 (RSSPPSPDVTLPPENTPVGQIQA) form a disordered region.

The protein belongs to the dihydroorotate dehydrogenase family. Type 2 subfamily. Monomer. Requires FMN as cofactor.

It is found in the cell membrane. The catalysed reaction is (S)-dihydroorotate + a quinone = orotate + a quinol. It participates in pyrimidine metabolism; UMP biosynthesis via de novo pathway; orotate from (S)-dihydroorotate (quinone route): step 1/1. Functionally, catalyzes the conversion of dihydroorotate to orotate with quinone as electron acceptor. This is Dihydroorotate dehydrogenase (quinone) from Synechococcus sp. (strain JA-2-3B'a(2-13)) (Cyanobacteria bacterium Yellowstone B-Prime).